Consider the following 696-residue polypeptide: Polyribonucleotide nucleotidyltransferase (696 aa).

2 residues coordinate Mg(2+): aspartate 489 and aspartate 495. The KH domain occupies 556 to 615 (PQYVTMKINPEKIRDVIGKGGVVIREITEATNCAIDISDDGTIKIAAHTTEEGEAAKRRI). The S1 motif domain maps to 625–693 (GKVYEGTVVK…RQGRVRLSMK (69 aa)).

This sequence belongs to the polyribonucleotide nucleotidyltransferase family. Component of the RNA degradosome, which is a multiprotein complex involved in RNA processing and mRNA degradation. Requires Mg(2+) as cofactor.

It localises to the cytoplasm. The catalysed reaction is RNA(n+1) + phosphate = RNA(n) + a ribonucleoside 5'-diphosphate. Its function is as follows. Involved in mRNA degradation. Catalyzes the phosphorolysis of single-stranded polyribonucleotides processively in the 3'- to 5'-direction. The protein is Polyribonucleotide nucleotidyltransferase of Coxiella burnetii (strain CbuG_Q212) (Coxiella burnetii (strain Q212)).